The chain runs to 194 residues: Large ribosomal subunit protein bL9 (194 aa).

Positions Pro-165 to Gly-194 are disordered. Residues Glu-166–Gly-194 are compositionally biased toward acidic residues.

This sequence belongs to the bacterial ribosomal protein bL9 family.

Functionally, binds to the 23S rRNA. The polypeptide is Large ribosomal subunit protein bL9 (Rhodospirillum rubrum (strain ATCC 11170 / ATH 1.1.1 / DSM 467 / LMG 4362 / NCIMB 8255 / S1)).